The chain runs to 502 residues: Carbon catabolite-derepressing protein kinase (502 aa).

Residues 14–269 (YYLGKILGVG…IGEIRKHSWF (256 aa)) enclose the Protein kinase domain. ATP contacts are provided by residues 20–28 (LGVGTFAKV) and K43. The active-site Proton acceptor is the D140. Position 173 is a phosphothreonine; by autocatalysis (T173). The 41-residue stretch at 290–330 (MIDEDTLRDVVKLGYDKDHVCESLCNRLQNEETVAYYLLLD) folds into the UBA domain. The 49-residue stretch at 453-501 (NSRLPAVIKFEIQLYKTKDDKYLLDMQRVTGPQLLFLEFCAAFLTNLRV) folds into the KA1 domain.

It belongs to the protein kinase superfamily. CAMK Ser/Thr protein kinase family. SNF1 subfamily.

The catalysed reaction is L-seryl-[protein] + ATP = O-phospho-L-seryl-[protein] + ADP + H(+). The enzyme catalyses L-threonyl-[protein] + ATP = O-phospho-L-threonyl-[protein] + ADP + H(+). Its function is as follows. Essential for release from glucose repression. This chain is Carbon catabolite-derepressing protein kinase (RKIN1), found in Secale cereale (Rye).